The primary structure comprises 142 residues: MKTFTAKPETVKRDWYVVDANGKTLGRLATELARRLRGKHKAEYTPHVDTGDYIIVLNADKVAVTGNKRNDKIYYHHTGHIGGIKQATFEEMIARRPERVIEIAVKGMLPKGPLGRAMFRKLKVYAGTEHNHAAQQPQVLDI.

Belongs to the universal ribosomal protein uL13 family. As to quaternary structure, part of the 50S ribosomal subunit.

In terms of biological role, this protein is one of the early assembly proteins of the 50S ribosomal subunit, although it is not seen to bind rRNA by itself. It is important during the early stages of 50S assembly. The polypeptide is Large ribosomal subunit protein uL13 (Pectobacterium carotovorum subsp. carotovorum (strain PC1)).